Reading from the N-terminus, the 89-residue chain is Small ribosomal subunit protein bS20 (89 aa).

The protein belongs to the bacterial ribosomal protein bS20 family.

Its function is as follows. Binds directly to 16S ribosomal RNA. This Xanthobacter autotrophicus (strain ATCC BAA-1158 / Py2) protein is Small ribosomal subunit protein bS20.